The chain runs to 346 residues: Phosphate acyltransferase (346 aa).

This sequence belongs to the PlsX family. Homodimer. Probably interacts with PlsY.

It localises to the cytoplasm. It carries out the reaction a fatty acyl-[ACP] + phosphate = an acyl phosphate + holo-[ACP]. Its pathway is lipid metabolism; phospholipid metabolism. In terms of biological role, catalyzes the reversible formation of acyl-phosphate (acyl-PO(4)) from acyl-[acyl-carrier-protein] (acyl-ACP). This enzyme utilizes acyl-ACP as fatty acyl donor, but not acyl-CoA. The protein is Phosphate acyltransferase of Deinococcus geothermalis (strain DSM 11300 / CIP 105573 / AG-3a).